Here is a 189-residue protein sequence, read N- to C-terminus: GTPase NRas (189 aa).

GTP-binding positions include Gly10–Ala18 and Val29–Asp30. The short motif at Tyr32–Tyr40 is the Effector region element. Asp57 to Gln61 is a binding site for GTP. Phosphoserine is present on Ser89. Asn116 to Asp119 contributes to the GTP binding site. The tract at residues Tyr166–Pro185 is hypervariable region. Lys170 is covalently cross-linked (Glycyl lysine isopeptide (Lys-Gly) (interchain with G-Cter in ubiquitin)). Cys181 is lipidated: S-palmitoyl cysteine. The S-farnesyl cysteine moiety is linked to residue Cys186. Positions Val187–Met189 are cleaved as a propeptide — removed in mature form.

It belongs to the small GTPase superfamily. Ras family. Interacts (active GTP-bound form preferentially) with RGS14. Interacts (active GTP-bound form) with RASSF7. Interacts (active GTP-bound form) with both SHOC2 and PP1c (all isoforms) to form a tertiary complex; SHOC2 and PP1c preferably bind M-Ras/MRAS, but they also bind K-Ras/KRAS, N-Ras/NRAS and H-Ras/HRAS. In terms of processing, palmitoylated by the ZDHHC9-GOLGA7 complex. Depalmitoylated by ABHD17A, ABHD17B and ABHD17C. A continuous cycle of de- and re-palmitoylation regulates rapid exchange between plasma membrane and Golgi. Post-translationally, acetylation at Lys-104 prevents interaction with guanine nucleotide exchange factors (GEFs). Ubiquitinated by the BCR(LZTR1) E3 ubiquitin ligase complex at Lys-170 in a non-degradative manner, leading to inhibit Ras signaling by decreasing Ras association with membranes. In terms of processing, phosphorylation at Ser-89 enhances NRAS association with its downstream effectors.

The protein localises to the cell membrane. Its subcellular location is the golgi apparatus membrane. The catalysed reaction is GTP + H2O = GDP + phosphate + H(+). With respect to regulation, alternates between an inactive form bound to GDP and an active form bound to GTP. Activated by a guanine nucleotide-exchange factor (GEF) and inactivated by a GTPase-activating protein (GAP). Ras proteins bind GDP/GTP and possess intrinsic GTPase activity. The chain is GTPase NRas (Nras) from Mus musculus (Mouse).